The sequence spans 599 residues: DNA primase (599 aa).

The CHC2-type zinc-finger motif lies at 38-62 (CPFHDEKTPSFTVSEDKQICHCFGC). In terms of domain architecture, Toprim spans 260 to 341 (DEIVLLEGFM…NVFVIQLPSG (82 aa)). Mg(2+) is bound by residues Glu266, Asp310, and Asp312.

The protein belongs to the DnaG primase family. As to quaternary structure, monomer. Interacts with DnaB. It depends on Zn(2+) as a cofactor. Mg(2+) is required as a cofactor.

The catalysed reaction is ssDNA + n NTP = ssDNA/pppN(pN)n-1 hybrid + (n-1) diphosphate.. Functionally, RNA polymerase that catalyzes the synthesis of short RNA molecules used as primers for DNA polymerase during DNA replication. In Staphylococcus aureus (strain MRSA252), this protein is DNA primase.